A 583-amino-acid polypeptide reads, in one-letter code: Membrane-bound O-acyltransferase gup1 (583 aa).

Over 1–52 the chain is Extracellular; sequence MLRLFRFDVLETSTKDTERPNSKSSRLSSTSGSSHPSSSSRLTVRSAVPEKS. Positions 15–42 are disordered; the sequence is KDTERPNSKSSRLSSTSGSSHPSSSSRL. Over residues 22–40 the composition is skewed to low complexity; sequence SKSSRLSSTSGSSHPSSSS. A helical membrane pass occupies residues 53–73; the sequence is AFGSIEFIFYFSVILSILTIA. Topologically, residues 74–119 are cytoplasmic; that stretch reads CFKIHYVSSPKHPNYKNIEKYLKPGWLFGQKVDSADFQYSAFRENM. Residues 120–140 form a helical membrane-spanning segment; sequence PILLLVIIVYNFLWRLVKLVF. Residues 141-159 lie on the Extracellular side of the membrane; it reads TKNTNDELAIKNNYRLCFS. Residues 160–180 traverse the membrane as a helical segment; the sequence is LLFALLVYGTGVIYVLTIALI. The Cytoplasmic segment spans residues 181 to 191; the sequence is NYLISKSLKNS. A helical membrane pass occupies residues 192–212; it reads IFNPLLTWTLDISVVFFKEYF. The Extracellular segment spans residues 213–298; the sequence is AYCKFSSLHP…SCLDEDYNLK (86 aa). Residues 299-319 form a helical membrane-spanning segment; it reads NFLTYIFYAPLYLAGPIISFN. Over 320 to 343 the chain is Cytoplasmic; it reads NFMSQMKYPTVSTLKYRNLLYAIR. Residues 344-364 form a helical membrane-spanning segment; sequence FLVCVLTMEFLLHYAYVTAIS. Over 365 to 373 the chain is Extracellular; the sequence is KDGNWNQYS. A helical transmembrane segment spans residues 374–394; sequence AVESAMISFIVLFMTWLKLLI. Residues 395 to 444 lie on the Cytoplasmic side of the membrane; that stretch reads PWRLFRLWSLIDDIEPPENIVRCMCNNYSAVGFWRAWHRSFNRWLIRYIY. The next 2 membrane-spanning stretches (helical) occupy residues 445–465 and 466–486; these read VPLGGSNHSILNLFIIFTFVA and LWHDISWELFAWGWLIVLFIL. His468 is a catalytic residue. Topologically, residues 487-512 are cytoplasmic; it reads PERLCCFMSRRTGLTKHPYYRYISGF. Residues 513 to 533 traverse the membrane as a helical segment; sequence GAALNIYFMIICNLIGFAVGI. The Extracellular portion of the chain corresponds to 534–549; the sequence is DGIKNVLVSFFLTLKG. Residues 550–570 traverse the membrane as a helical segment; it reads AMSAIAAFIMFFSAVQIMFQI. Topologically, residues 571–583 are cytoplasmic; sequence RVNEEEEGINLRC.

Belongs to the membrane-bound acyltransferase family.

It is found in the cell membrane. It localises to the endoplasmic reticulum membrane. The protein resides in the mitochondrion membrane. Functionally, membrane-bound O-acyltransferase involved in the remodeling of glycosylphosphatidylinositol (GPI) anchors. Acts only on GPI-anchored proteins, but not on free GPI lipids. Also involved in lipid metabolism, having profound effects on sphingolipid-sterol-ordered domains integrity and assembly. Involved in cell integrity and apoptosis. In Schizosaccharomyces pombe (strain 972 / ATCC 24843) (Fission yeast), this protein is Membrane-bound O-acyltransferase gup1 (gup1).